A 132-amino-acid chain; its full sequence is Small ribosomal subunit protein uS8 (132 aa).

Belongs to the universal ribosomal protein uS8 family. In terms of assembly, part of the 30S ribosomal subunit. Contacts proteins S5 and S12.

One of the primary rRNA binding proteins, it binds directly to 16S rRNA central domain where it helps coordinate assembly of the platform of the 30S subunit. The chain is Small ribosomal subunit protein uS8 from Bartonella henselae (strain ATCC 49882 / DSM 28221 / CCUG 30454 / Houston 1) (Rochalimaea henselae).